A 391-amino-acid chain; its full sequence is CBS domain-containing protein CBSX5 (391 aa).

CBS domains follow at residues 16-81 (GKPP…DHDH) and 331-391 (MARK…ENDM).

This is CBS domain-containing protein CBSX5 (CBSX5) from Arabidopsis thaliana (Mouse-ear cress).